An 83-amino-acid polypeptide reads, in one-letter code: Colicin-E5 immunity protein (83 aa).

In terms of biological role, this protein is able to protect a cell, which harbors the plasmid ColE5 encoding colicin E5, against colicin E5. This chain is Colicin-E5 immunity protein (imm), found in Escherichia coli.